Here is a 393-residue protein sequence, read N- to C-terminus: 1-deoxy-D-xylulose 5-phosphate reductoisomerase (393 aa).

8 residues coordinate NADPH: threonine 16, glycine 17, serine 18, isoleucine 19, alanine 42, arginine 43, asparagine 44, and asparagine 127. Residue lysine 128 participates in 1-deoxy-D-xylulose 5-phosphate binding. Glutamate 129 is an NADPH binding site. Mn(2+) is bound at residue aspartate 153. Positions 154, 155, 179, and 202 each coordinate 1-deoxy-D-xylulose 5-phosphate. Residue glutamate 155 participates in Mn(2+) binding. Glycine 208 contributes to the NADPH binding site. Residues serine 215, asparagine 220, lysine 221, and glutamate 224 each coordinate 1-deoxy-D-xylulose 5-phosphate. Position 224 (glutamate 224) interacts with Mn(2+).

Belongs to the DXR family. The cofactor is Mg(2+). Mn(2+) is required as a cofactor.

It catalyses the reaction 2-C-methyl-D-erythritol 4-phosphate + NADP(+) = 1-deoxy-D-xylulose 5-phosphate + NADPH + H(+). It participates in isoprenoid biosynthesis; isopentenyl diphosphate biosynthesis via DXP pathway; isopentenyl diphosphate from 1-deoxy-D-xylulose 5-phosphate: step 1/6. Functionally, catalyzes the NADPH-dependent rearrangement and reduction of 1-deoxy-D-xylulose-5-phosphate (DXP) to 2-C-methyl-D-erythritol 4-phosphate (MEP). This Jannaschia sp. (strain CCS1) protein is 1-deoxy-D-xylulose 5-phosphate reductoisomerase.